A 1201-amino-acid polypeptide reads, in one-letter code: Potassium channel subfamily T member 1 (1201 aa).

Positions 1–28 are disordered; sequence MARAKLKNSPSESNSHVKTVPPATTEDV. The Cytoplasmic segment spans residues 1–92; that stretch reads MARAKLKNSP…FFIKNQRSSL (92 aa). Residues 8 to 17 show a composition bias toward polar residues; sequence NSPSESNSHV. Residues 93-115 traverse the membrane as a helical segment; that stretch reads RIRLFNFSLKLLTCLLYIVRVLL. At 116–152 the chain is on the extracellular side; the sequence is DNPEEGIGCWECEKQNYTLFNQSTKINWSHIFWVDRK. N-linked (GlcNAc...) asparagine glycans are attached at residues Asn131 and Asn136. Residues 153-175 traverse the membrane as a helical segment; it reads LPLWAVQVSIALISFLETMLLIY. Residues 176-184 are Cytoplasmic-facing; the sequence is LSYKGNIWE. The helical transmembrane segment at 185–206 threads the bilayer; that stretch reads QIFRISFILEMINTVPFIITIF. The Extracellular segment spans residues 207–216; it reads WPPLRNLFIP. The chain crosses the membrane as a helical span at residues 217 to 229; sequence VFLNCWLAKYALE. Residues 230–249 are Cytoplasmic-facing; sequence NMINDLHRAIQRTQSAMFNQ. The helical transmembrane segment at 250-272 threads the bilayer; the sequence is VLILICTLLCLVFTGTCGIQHLE. Residues 273–279 are Extracellular-facing; that stretch reads RAGEKLS. Residues 280–300 constitute an intramembrane region (pore-forming); sequence LFKSFYFCIVTFSTVGYGDVT. The K(+) site is built by Val294 and Gly295. Topologically, residues 301 to 304 are extracellular; the sequence is PKIW. A helical transmembrane segment spans residues 305 to 326; the sequence is PSQLLVVIMICVALVVLPLQFE. Over 327-1201 the chain is Cytoplasmic; it reads ELVYLWMERQ…NPETRDETQL (875 aa). The region spanning 350–486 is the RCK N-terminal 1 domain; sequence EKHVVLCVSS…FHVKFADHVV (137 aa). Na(+)-binding residues include Leu511, His514, Ser536, and Asn538. The Zn(2+) site is built by Cys750 and Cys751. Arg753 and Lys756 together coordinate K(+). Na(+) is bound by residues Arg753 and Lys756. Zn(2+) contacts are provided by Cys758 and His760. K(+)-binding residues include Asn761, Tyr769, and Gly770. Phe771 contacts Na(+). The RCK N-terminal 2 domain occupies 773–913; the sequence is NKLIIVSAET…QFRAKDSYSL (141 aa). Residues Ser779, Leu810, Asp812, Gly834, and Asp857 each coordinate K(+). A disordered region spans residues 1175 to 1201; it reads NDGHSRKSSCSNKLGPCNPETRDETQL.

Belongs to the potassium channel family. Calcium-activated (TC 1.A.1.3) subfamily. KCa4.1/KCNT1 sub-subfamily. Homotetramer; which constitutes the Na(+)-activated K(+) channel. Interacts with KCNT2; these heterodimer channels differ from the homomers in their unitary conductance, kinetic behavior, subcellular localization, and response to activation of protein kinase C. In terms of processing, phosphorylated by protein kinase C. Phosphorylation of the C-terminal domain increases channel activity.

The protein localises to the cell membrane. It carries out the reaction K(+)(in) = K(+)(out). Its activity is regulated as follows. Activated by high intracellular Na(+). In addition to activation by Na(+), is cooperatively activated by intracellular Cl(-) levels. Inhibited by Zn(2+). Activated upon stimulation of G-protein coupled receptors, such as CHRM1 and GRIA1. In terms of biological role, sodium-activated K(+) channel. Acts as an important mediator of neuronal membrane excitability. Contributes to the delayed outward currents. Regulates of neuronal bursting in sensory neurons. Contributes to synaptic development and plasticity. In Gallus gallus (Chicken), this protein is Potassium channel subfamily T member 1 (KCNT1).